The sequence spans 398 residues: Bifunctional enzyme IspD/IspF (398 aa).

The tract at residues 1–234 (MTNSPRTAAI…SRLMAALGDI (234 aa)) is 2-C-methyl-D-erythritol 4-phosphate cytidylyltransferase. The interval 235–398 (RTGTGYDVHA…LPWGADGLAG (164 aa)) is 2-C-methyl-D-erythritol 2,4-cyclodiphosphate synthase. 2 residues coordinate a divalent metal cation: Asp-241 and His-243. 4-CDP-2-C-methyl-D-erythritol 2-phosphate contacts are provided by residues 241-243 (DVH) and 267-268 (HS). His-275 contacts a divalent metal cation. 4-CDP-2-C-methyl-D-erythritol 2-phosphate contacts are provided by residues 289–291 (DIG), 365–368 (TTSE), Phe-372, and Arg-375.

In the N-terminal section; belongs to the IspD/TarI cytidylyltransferase family. IspD subfamily. This sequence in the C-terminal section; belongs to the IspF family. Requires a divalent metal cation as cofactor.

The enzyme catalyses 2-C-methyl-D-erythritol 4-phosphate + CTP + H(+) = 4-CDP-2-C-methyl-D-erythritol + diphosphate. It carries out the reaction 4-CDP-2-C-methyl-D-erythritol 2-phosphate = 2-C-methyl-D-erythritol 2,4-cyclic diphosphate + CMP. Its pathway is isoprenoid biosynthesis; isopentenyl diphosphate biosynthesis via DXP pathway; isopentenyl diphosphate from 1-deoxy-D-xylulose 5-phosphate: step 2/6. The protein operates within isoprenoid biosynthesis; isopentenyl diphosphate biosynthesis via DXP pathway; isopentenyl diphosphate from 1-deoxy-D-xylulose 5-phosphate: step 4/6. In terms of biological role, bifunctional enzyme that catalyzes the formation of 4-diphosphocytidyl-2-C-methyl-D-erythritol from CTP and 2-C-methyl-D-erythritol 4-phosphate (MEP) (IspD), and catalyzes the conversion of 4-diphosphocytidyl-2-C-methyl-D-erythritol 2-phosphate (CDP-ME2P) to 2-C-methyl-D-erythritol 2,4-cyclodiphosphate (ME-CPP) with a corresponding release of cytidine 5-monophosphate (CMP) (IspF). The chain is Bifunctional enzyme IspD/IspF from Rhodopseudomonas palustris (strain TIE-1).